Reading from the N-terminus, the 90-residue chain is Probable Fe(2+)-trafficking protein (90 aa).

It belongs to the Fe(2+)-trafficking protein family.

Its function is as follows. Could be a mediator in iron transactions between iron acquisition and iron-requiring processes, such as synthesis and/or repair of Fe-S clusters in biosynthetic enzymes. This Pseudoalteromonas atlantica (strain T6c / ATCC BAA-1087) protein is Probable Fe(2+)-trafficking protein.